We begin with the raw amino-acid sequence, 825 residues long: Endochitinase A1 (825 aa).

The signal sequence occupies residues 1-22; it reads MVSSKLSFVATAVAALAPLASA. Residues 29 to 338 form the GH18 domain; sequence SNLAIYWGQG…DHMKDILLHC (310 aa). The Proton donor role is filled by Glu174. Disordered stretches follow at residues 338–568, 680–736, and 750–792; these read CDPS…TTTA, PVTE…VSTS, and PLIL…YTQE. Positions 344–554 are enriched in low complexity; it reads VTSSSAVPSS…STDESSTTVG (211 aa). Residue Asn559 is glycosylated (N-linked (GlcNAc...) asparagine). The segment covering 701–712 has biased composition (polar residues); it reads EGSNPTQPSGAS. The N-linked (GlcNAc...) asparagine glycan is linked to Asn717. The span at 772-792 shows a compositional bias: polar residues; sequence PSGQNSGSSSHVPIPPSYTQE. Gly800 is lipidated: GPI-anchor amidated glycine. Positions 801–825 are cleaved as a propeptide — removed in mature form; the sequence is AASRVTGLGHGLVLTVLTLSAFFVL.

This sequence belongs to the glycosyl hydrolase 18 family. Chitinase class III subfamily. Post-translationally, O-mannosylated by pmt4.

It is found in the cell membrane. It localises to the secreted. The protein localises to the cell wall. It carries out the reaction Random endo-hydrolysis of N-acetyl-beta-D-glucosaminide (1-&gt;4)-beta-linkages in chitin and chitodextrins.. Its activity is regulated as follows. The cyclic peptide natural product argifin acts as a specific inhibitor. Functionally, GPI-anchored chitinase involved in the degradation of chitin, a component of the cell walls of fungi and exoskeletal elements of some animals (including worms and arthropods). Required to reshape the cell wall at the sites where cell wall remodeling and/or cell wall maturation actively take place such as sites of conidia formation. In Aspergillus fumigatus (Neosartorya fumigata), this protein is Endochitinase A1 (chiA1).